We begin with the raw amino-acid sequence, 255 residues long: Hydroxyacylglutathione hydrolase (255 aa).

H56, H58, D60, H61, H114, D133, and H171 together coordinate Zn(2+).

Belongs to the metallo-beta-lactamase superfamily. Glyoxalase II family. In terms of assembly, monomer. Zn(2+) serves as cofactor.

It carries out the reaction an S-(2-hydroxyacyl)glutathione + H2O = a 2-hydroxy carboxylate + glutathione + H(+). Its pathway is secondary metabolite metabolism; methylglyoxal degradation; (R)-lactate from methylglyoxal: step 2/2. Functionally, thiolesterase that catalyzes the hydrolysis of S-D-lactoyl-glutathione to form glutathione and D-lactic acid. This is Hydroxyacylglutathione hydrolase from Cereibacter sphaeroides (strain ATCC 17029 / ATH 2.4.9) (Rhodobacter sphaeroides).